The sequence spans 195 residues: Nucleoside triphosphate pyrophosphatase (195 aa).

Aspartate 76 functions as the Proton acceptor in the catalytic mechanism.

This sequence belongs to the Maf family. A divalent metal cation is required as a cofactor.

The protein localises to the cytoplasm. It carries out the reaction a ribonucleoside 5'-triphosphate + H2O = a ribonucleoside 5'-phosphate + diphosphate + H(+). The enzyme catalyses a 2'-deoxyribonucleoside 5'-triphosphate + H2O = a 2'-deoxyribonucleoside 5'-phosphate + diphosphate + H(+). Its function is as follows. Nucleoside triphosphate pyrophosphatase. May have a dual role in cell division arrest and in preventing the incorporation of modified nucleotides into cellular nucleic acids. The polypeptide is Nucleoside triphosphate pyrophosphatase (Pelagibacter ubique (strain HTCC1062)).